Consider the following 308-residue polypeptide: MAEKSKVLIIGGTGYIGKFVVEASAKSGHPTFALVRESTLSDPVKSKIVENFKNLGVTILHGDLYDHESLVKAIKQVDVVISTMGMMQLGDQVKLIAAIKEAGNIKRFFPSEFGMDVDKTNAVEPAKSAFAVKVQIRRAIEAEGIPYTYVSCNCFAGYFLPTMVQPGATVPPRDKVIIPGDGNVKAVFNEEHDIGTYTIKAVDDPRTLNKTLYIKPPKNTLSFNELVAMWEKMIGKTLEKIYIPEEQILKDIETSPMPLPVILAINHATFVKGDQTNFKIEPSFGVEASELYPDVKYTTVEDYLGHFV.

NADP(+)-binding positions include 11 to 17 (GGTGYIG), R36, and K45. The active-site Proton acceptor is the K133. Residue R137 coordinates NADP(+).

This sequence belongs to the NmrA-type oxidoreductase family. Isoflavone reductase subfamily. As to expression, expressed in flowers. Expressed at low levels in stems.

The catalysed reaction is (-)-dehydrodiconiferyl alcohol + NADPH + H(+) = (S)-isodihydrodehydrodiconiferyl alcohol + NADP(+). The enzyme catalyses (+)-dehydrodiconiferyl alcohol + NADPH + H(+) = (R)-isodihydrodehydrodiconiferyl alcohol + NADP(+). It carries out the reaction (2R,3S)-dihydrodehydrodiconiferyl alcohol + NADPH + H(+) = (S)-tetrahydrodehydrodiconiferyl alcohol + NADP(+). It catalyses the reaction (2S,3R)-dihydrodehydrodiconiferyl alcohol + NADPH + H(+) = (R)-tetrahydrodehydrodiconiferyl alcohol + NADP(+). In terms of biological role, oxidoreductase involved in lignan biosynthesis. Catalyzes the NADPH-dependent reduction of phenylcoumaran benzylic ethers. Converts dehydrodiconiferyl alcohol (DDC) to isodihydrodehydrodiconiferyl alcohol (IDDDC), and dihydrodehydrodiconiferyl alcohol (DDDC) to tetrahydrodehydrodiconiferyl alcohol (TDDC). This is Phenylcoumaran benzylic ether reductase TP7 from Nicotiana tabacum (Common tobacco).